Reading from the N-terminus, the 130-residue chain is Fluoride-specific ion channel FluC (130 aa).

4 consecutive transmembrane segments (helical) span residues 3–23 (FVFL…YFVG), 39–59 (GTFS…HLAV), 67–87 (FGIF…SYGL), and 102–122 (ISYV…GWFL). The Na(+) site is built by Gly-77 and Thr-80.

It belongs to the fluoride channel Fluc/FEX (TC 1.A.43) family.

Its subcellular location is the cell inner membrane. The catalysed reaction is fluoride(in) = fluoride(out). With respect to regulation, na(+) is not transported, but it plays an essential structural role and its presence is essential for fluoride channel function. Its function is as follows. Fluoride-specific ion channel. Important for reducing fluoride concentration in the cell, thus reducing its toxicity. This chain is Fluoride-specific ion channel FluC, found in Helicobacter pylori (strain P12).